The chain runs to 171 residues: HTH-type transcriptional regulator AldR (171 aa).

The span at 1–14 shows a compositional bias: polar residues; the sequence is MSEGSSITGVQTPG. Positions 1–21 are disordered; it reads MSEGSSITGVQTPGSPKDVRA. The 62-residue stretch at 24–85 folds into the HTH asnC-type domain; it reads LDDIDRRILL…DIDPAAVGLG (62 aa). Residues 43-62 constitute a DNA-binding region (H-T-H motif); it reads NSALAEMVGIAPSTCHGRVR.

In terms of assembly, homodimer in the absence of L-alanine. Homooctamer in the presence of L-alanine. Homotetramers in the presence of L-cysteine.

With respect to regulation, in the presence of alanine, AldR changes its quaternary structure from a homodimer to an octamer with an open-ring conformation. The binding affinity of AldR for the ald control region is increased significantly by L-alanine. In vitro, L-cysteine also increases the binding affinity of AldR for the target DNA. Transcriptional regulator that might play a role under hypoxic conditions. Regulates the expression of ald, which encodes L-alanine dehydrogenase. Serves as both an activator for ald expression in the presence of L-alanine and a repressor in the absence of L-alanine. Acts by binding directly to the upstream region of the ald gene. Four AldR-binding sites (O2, O1, O4 and O3) were identified upstream of the ald gene. O2, O1 and O4 are required for the induction of ald expression by alanine, while O3 is directly involved in the repression of ald expression, by occluding the access of RNA polymerase to the ald promoter. In addition to O3, both O1 and O4 are also necessary for full repression of ald expression in the absence of alanine. The polypeptide is HTH-type transcriptional regulator AldR (Mycolicibacterium smegmatis (strain ATCC 700084 / mc(2)155) (Mycobacterium smegmatis)).